The following is a 134-amino-acid chain: Large ribosomal subunit protein bL20 (134 aa).

Belongs to the bacterial ribosomal protein bL20 family.

Functionally, binds directly to 23S ribosomal RNA and is necessary for the in vitro assembly process of the 50S ribosomal subunit. It is not involved in the protein synthesizing functions of that subunit. In Rhizobium meliloti (strain 1021) (Ensifer meliloti), this protein is Large ribosomal subunit protein bL20.